The chain runs to 377 residues: DNA-directed RNA polymerase subunit alpha (377 aa).

The interval methionine 1 to aspartate 259 is alpha N-terminal domain (alpha-NTD). An alpha C-terminal domain (alpha-CTD) region spans residues lysine 276 to glycine 377.

This sequence belongs to the RNA polymerase alpha chain family. Homodimer. The RNAP catalytic core consists of 2 alpha, 1 beta, 1 beta' and 1 omega subunit. When a sigma factor is associated with the core the holoenzyme is formed, which can initiate transcription.

The catalysed reaction is RNA(n) + a ribonucleoside 5'-triphosphate = RNA(n+1) + diphosphate. DNA-dependent RNA polymerase catalyzes the transcription of DNA into RNA using the four ribonucleoside triphosphates as substrates. This is DNA-directed RNA polymerase subunit alpha from Chlamydia trachomatis serovar A (strain ATCC VR-571B / DSM 19440 / HAR-13).